A 103-amino-acid chain; its full sequence is Protein S100-A16 (103 aa).

The EF-hand 1; degenerate domain occupies 12-47 (VIVLVENFYKYVSKYSLVKNKISKSSFREMLQKELN). In terms of domain architecture, EF-hand 2 spans 54–89 (GNRKAADKLIQNLDANHDGRISFDEYWTLIGGITGP). Ca(2+) contacts are provided by aspartate 67, asparagine 69, aspartate 71, arginine 73, and glutamate 78.

This sequence belongs to the S-100 family. As to quaternary structure, homodimer. Interacts with TP53. Ubiquitous. Highly expressed in esophagus, adipose tissues and colon. Expressed at lower level in lung, brain, pancreas and skeletal muscle. Expression is up-regulated in tumors of bladder, lung, thyroid gland, pancreas and ovary. Expressed in astrocytes.

Its subcellular location is the nucleus. It is found in the nucleolus. The protein resides in the cytoplasm. Calcium-binding protein. Binds one calcium ion per monomer. Can promote differentiation of adipocytes (in vitro). Overexpression in preadipocytes increases their proliferation, enhances adipogenesis and reduces insulin-stimulated glucose uptake. This Homo sapiens (Human) protein is Protein S100-A16.